Reading from the N-terminus, the 180-residue chain is N-terminal acetyltransferase B complex catalytic subunit naa20 (180 aa).

Residues 2-156 (TDTRKFKATD…DSFDMRKPLS (155 aa)) enclose the N-acetyltransferase domain.

The protein belongs to the acetyltransferase family. As to quaternary structure, component of the N-terminal acetyltransferase B (NatB) complex.

The protein resides in the cytoplasm. It localises to the nucleus. The enzyme catalyses N-terminal L-methionyl-L-asparaginyl-[protein] + acetyl-CoA = N-terminal N(alpha)-acetyl-L-methionyl-L-asparaginyl-[protein] + CoA + H(+). It catalyses the reaction N-terminal L-methionyl-L-glutaminyl-[protein] + acetyl-CoA = N-terminal N(alpha)-acetyl-L-methionyl-L-glutaminyl-[protein] + CoA + H(+). The catalysed reaction is N-terminal L-methionyl-L-aspartyl-[protein] + acetyl-CoA = N-terminal N(alpha)-acetyl-L-methionyl-L-aspartyl-[protein] + CoA + H(+). It carries out the reaction N-terminal L-methionyl-L-glutamyl-[protein] + acetyl-CoA = N-terminal N(alpha)-acetyl-L-methionyl-L-glutamyl-[protein] + CoA + H(+). Catalytic subunit of the NatB N-terminal acetyltransferase, which catalyzes acetylation of the amino-terminal methionine residues of all proteins beginning with Met-Asp or Met-Glu and of some proteins beginning with Met-Asn, Met-Gln or Met-Met. The sequence is that of N-terminal acetyltransferase B complex catalytic subunit naa20 (naa20) from Schizosaccharomyces pombe (strain 972 / ATCC 24843) (Fission yeast).